Consider the following 31-residue polypeptide: M-poneritoxin-Nc3b (31 aa).

The protein belongs to the ponericin-G family. Expressed by the venom gland.

Its subcellular location is the secreted. It is found in the target cell membrane. Functionally, membrane-perturbating peptide with a few moderate activities. It is insecticidal, since it induces reversible paralysis in insects (L.cuprina) after 1 hour, but fails to kill them. It is also antiparasitic, since it moderately inhibits the larval development of the major pathogenic nematode of ruminants (H.contortus, IC(50)=23.2 uM) and reduces the motility of adult males of the other nematode B.malayi. It does not show antibacterial activity (MIC&gt;40 uM). It is not cytotoxic to HEK293 cells and does not induce hemolysis in human erythrocytes. It does not cause an increase in intracellular calcium concentration on neuronal and epithelial cell lines. The polypeptide is M-poneritoxin-Nc3b (Neoponera commutata (Large hunting ant)).